We begin with the raw amino-acid sequence, 437 residues long: Rhoptry apical surface protein 2 (437 aa).

A C2 domain is found at 45-179; it reads GCLGSLFFYL…PRINLSLHKL (135 aa). A PH domain is found at 230–338; the sequence is EGPLERLNAN…FIEKLRAYRE (109 aa). The segment at 341–437 is disordered; that stretch reads STRVPSQKGA…SVVGDEEPQT (97 aa). The span at 375–384 shows a compositional bias: basic residues; that stretch reads RKSGGKKSRR.

As to quaternary structure, interacts with RASP1. Interacts with RASP3.

Its subcellular location is the cytoplasmic vesicle. The protein localises to the secretory vesicle. The protein resides in the rhoptry membrane. In terms of biological role, essential for tachyzoite invasion of host cells by controlling rhoptry secretion. Binds to phosphatidic acid (PA) and phosphatidylinositol 4,5-bisphosphate (PIP2) lipids and thus, likely contributes to the assembly of the machinery that docks or primes the rhoptry to the parasite cell membrane prior to the fusion with the host cell membrane. The protein is Rhoptry apical surface protein 2 of Toxoplasma gondii (strain ATCC 50853 / GT1).